A 360-amino-acid polypeptide reads, in one-letter code: Peptide chain release factor 1 (360 aa).

Glutamine 235 is subject to N5-methylglutamine. The interval 286–313 is disordered; that stretch reads RQQAEASTRRNLLGSGDRSDRNRTYNFP.

It belongs to the prokaryotic/mitochondrial release factor family. In terms of processing, methylated by PrmC. Methylation increases the termination efficiency of RF1.

It is found in the cytoplasm. In terms of biological role, peptide chain release factor 1 directs the termination of translation in response to the peptide chain termination codons UAG and UAA. The protein is Peptide chain release factor 1 of Cronobacter sakazakii (strain ATCC BAA-894) (Enterobacter sakazakii).